The chain runs to 530 residues: CTP synthase (530 aa).

The amidoligase domain stretch occupies residues 1–264 (MPKLIIVTGG…GDFLTRRLRL (264 aa)). A CTP-binding site is contributed by Ser-13. UTP is bound at residue Ser-13. ATP is bound at residue 14 to 19 (GVGKGV). Position 54 (Tyr-54) interacts with L-glutamine. Position 71 (Asp-71) interacts with ATP. Mg(2+) is bound by residues Asp-71 and Glu-139. Residues 146-148 (DYE), 185-190 (KTKPLQ), and Lys-221 contribute to the CTP site. UTP-binding positions include 185-190 (KTKPLQ) and Lys-221. Residues 289-530 (SVGMCGKYVE…LLKAALFAKR (242 aa)) form the Glutamine amidotransferase type-1 domain. Gly-351 serves as a coordination point for L-glutamine. Cys-378 serves as the catalytic Nucleophile; for glutamine hydrolysis. L-glutamine contacts are provided by residues 379–382 (FGMQ), Glu-402, and Arg-459. Active-site residues include His-504 and Glu-506.

It belongs to the CTP synthase family. As to quaternary structure, homotetramer.

It catalyses the reaction UTP + L-glutamine + ATP + H2O = CTP + L-glutamate + ADP + phosphate + 2 H(+). The catalysed reaction is L-glutamine + H2O = L-glutamate + NH4(+). It carries out the reaction UTP + NH4(+) + ATP = CTP + ADP + phosphate + 2 H(+). Its pathway is pyrimidine metabolism; CTP biosynthesis via de novo pathway; CTP from UDP: step 2/2. With respect to regulation, allosterically activated by GTP, when glutamine is the substrate; GTP has no effect on the reaction when ammonia is the substrate. The allosteric effector GTP functions by stabilizing the protein conformation that binds the tetrahedral intermediate(s) formed during glutamine hydrolysis. Inhibited by the product CTP, via allosteric rather than competitive inhibition. Catalyzes the ATP-dependent amination of UTP to CTP with either L-glutamine or ammonia as the source of nitrogen. Regulates intracellular CTP levels through interactions with the four ribonucleotide triphosphates. This Pyrobaculum aerophilum (strain ATCC 51768 / DSM 7523 / JCM 9630 / CIP 104966 / NBRC 100827 / IM2) protein is CTP synthase.